A 456-amino-acid chain; its full sequence is Bifunctional protein GlmU (456 aa).

Residues 1–229 (MYNCAIILAA…FEETMGVNSR (229 aa)) form a pyrophosphorylase region. Residues 8–11 (LAAG), lysine 22, glutamine 73, and 78–79 (GT) each bind UDP-N-acetyl-alpha-D-glucosamine. Aspartate 103 contributes to the Mg(2+) binding site. Residues glycine 140, glutamate 155, asparagine 170, and asparagine 227 each contribute to the UDP-N-acetyl-alpha-D-glucosamine site. Residue asparagine 227 coordinates Mg(2+). A linker region spans residues 230–250 (VQLAEAEKIMRNRINKIHMEN). The interval 251-456 (GVTLIDHNNT…SWVYKKGLKK (206 aa)) is N-acetyltransferase. 2 residues coordinate UDP-N-acetyl-alpha-D-glucosamine: arginine 332 and lysine 350. Histidine 362 (proton acceptor) is an active-site residue. Tyrosine 365 and asparagine 376 together coordinate UDP-N-acetyl-alpha-D-glucosamine. Residues 385 to 386 (NY), alanine 422, and arginine 439 contribute to the acetyl-CoA site.

This sequence in the N-terminal section; belongs to the N-acetylglucosamine-1-phosphate uridyltransferase family. The protein in the C-terminal section; belongs to the transferase hexapeptide repeat family. In terms of assembly, homotrimer. Mg(2+) serves as cofactor.

It is found in the cytoplasm. The catalysed reaction is alpha-D-glucosamine 1-phosphate + acetyl-CoA = N-acetyl-alpha-D-glucosamine 1-phosphate + CoA + H(+). It catalyses the reaction N-acetyl-alpha-D-glucosamine 1-phosphate + UTP + H(+) = UDP-N-acetyl-alpha-D-glucosamine + diphosphate. It participates in nucleotide-sugar biosynthesis; UDP-N-acetyl-alpha-D-glucosamine biosynthesis; N-acetyl-alpha-D-glucosamine 1-phosphate from alpha-D-glucosamine 6-phosphate (route II): step 2/2. It functions in the pathway nucleotide-sugar biosynthesis; UDP-N-acetyl-alpha-D-glucosamine biosynthesis; UDP-N-acetyl-alpha-D-glucosamine from N-acetyl-alpha-D-glucosamine 1-phosphate: step 1/1. Its pathway is bacterial outer membrane biogenesis; LPS lipid A biosynthesis. In terms of biological role, catalyzes the last two sequential reactions in the de novo biosynthetic pathway for UDP-N-acetylglucosamine (UDP-GlcNAc). The C-terminal domain catalyzes the transfer of acetyl group from acetyl coenzyme A to glucosamine-1-phosphate (GlcN-1-P) to produce N-acetylglucosamine-1-phosphate (GlcNAc-1-P), which is converted into UDP-GlcNAc by the transfer of uridine 5-monophosphate (from uridine 5-triphosphate), a reaction catalyzed by the N-terminal domain. The chain is Bifunctional protein GlmU from Clostridium kluyveri (strain NBRC 12016).